An 80-amino-acid chain; its full sequence is Raniseptin-6 (80 aa).

The first 22 residues, 1–22 (MAFLKKSLFLVLFLGIVSLSIC), serve as a signal peptide directing secretion. The propeptide occupies 23–49 (EEEKREGEEEEKQEEENEELSEEELRE).

It belongs to the frog skin active peptide (FSAP) family. Dermaseptin subfamily. As to expression, expressed by the skin glands.

Its subcellular location is the secreted. Its function is as follows. Has antibacterial activity. The chain is Raniseptin-6 from Boana raniceps (Chaco tree frog).